The primary structure comprises 578 residues: Serine/threonine-protein kinase D6PKL3 (578 aa).

Low complexity predominate over residues 1–24 (MDSSSSVVYVGSSSKSRNFQSKSK). The tract at residues 1–64 (MDSSSSVVYV…EVIESSVSSV (64 aa)) is disordered. Over residues 25-34 (GSITSFSIDS) the composition is skewed to polar residues. The segment covering 53-64 (SPEVIESSVSSV) has biased composition (low complexity). In terms of domain architecture, Protein kinase spans 182-516 (FKLIKKLGGG…ATEIKQHPFF (335 aa)). ATP is bound by residues 188–196 (LGGGDIGNV) and Lys-211. Asp-307 (proton acceptor) is an active-site residue. Residues 325 to 426 (DFDLSLRCAV…VGTHEYLAPE (102 aa)) form an activation loop region. The PIF signature appears at 575–578 (IDFF).

It belongs to the protein kinase superfamily. AGC Ser/Thr protein kinase family. As to expression, expressed predominantly in root tissue with lower levels found in leaf, stem, seed and flower.

It localises to the cell membrane. The catalysed reaction is L-seryl-[protein] + ATP = O-phospho-L-seryl-[protein] + ADP + H(+). It catalyses the reaction L-threonyl-[protein] + ATP = O-phospho-L-threonyl-[protein] + ADP + H(+). Its function is as follows. Protein kinase that regulates the auxin transport activity of PIN auxin efflux facilitators by direct phosphorylation. D6PK-mediated PIN phosphorylation promotes auxin transport in the hypocotyl and this is a prerequisite for PHOT1-dependent hypocotyl bending. This Arabidopsis thaliana (Mouse-ear cress) protein is Serine/threonine-protein kinase D6PKL3 (D6PKL3).